The following is a 274-amino-acid chain: MGTLSVNQNKLQKRLRRLAGEAITDYNMIEDGDKVMVCLSGGKDSYTMLDVLLHLQKVAPIKFEIVAVNMDQKQPGFPEHVLPAYLKELGVEYHIVEKDTYSVVKELVPEGKTTCSLCSRLRRGTLYTFADEIGATKMALGHHRDDIVETFFLNMFFNGALKGMPPKLRADDGRNVVIRPLAYCSEKDIQAYSDMKEFPIIPCNLCGSQENLQRQVVKDMLVEWERKHPGRTESIFRALQNVAPSQLADRNLFDFTSLKIDENATPRFLDVLNI.

Positions S40 to S45 match the PP-loop motif motif. [4Fe-4S] cluster-binding residues include C115, C118, and C206.

It belongs to the TtcA family. In terms of assembly, homodimer. Requires Mg(2+) as cofactor. [4Fe-4S] cluster serves as cofactor.

The protein resides in the cytoplasm. The catalysed reaction is cytidine(32) in tRNA + S-sulfanyl-L-cysteinyl-[cysteine desulfurase] + AH2 + ATP = 2-thiocytidine(32) in tRNA + L-cysteinyl-[cysteine desulfurase] + A + AMP + diphosphate + H(+). It participates in tRNA modification. Functionally, catalyzes the ATP-dependent 2-thiolation of cytidine in position 32 of tRNA, to form 2-thiocytidine (s(2)C32). The sulfur atoms are provided by the cysteine/cysteine desulfurase (IscS) system. This is tRNA-cytidine(32) 2-sulfurtransferase from Pseudomonas putida (strain GB-1).